A 527-amino-acid polypeptide reads, in one-letter code: Bifunctional dihydrofolate reductase-thymidylate synthase (527 aa).

One can recognise a DHFR domain in the interval Pro28 to Pro238. Val32 contacts substrate. Residues Ala34 and Gly40–Thr46 contribute to the NADP(+) site. Asp54 lines the substrate pocket. Residues Arg84 to Thr86 and Leu105 to Ser108 contribute to the NADP(+) site. The substrate site is built by Ile160, Tyr166, and Thr184. Gly161–Gln168 is a binding site for NADP(+). The interval Glu243–Val527 is thymidylate synthase. Arg263 is a binding site for dUMP. The active site involves Cys409. Residues His410, Gln428–Asp432, Asn440, and His470–Tyr472 contribute to the dUMP site.

This sequence in the N-terminal section; belongs to the dihydrofolate reductase family. In the C-terminal section; belongs to the thymidylate synthase family. In terms of assembly, homodimer.

The catalysed reaction is dUMP + (6R)-5,10-methylene-5,6,7,8-tetrahydrofolate = 7,8-dihydrofolate + dTMP. It carries out the reaction (6S)-5,6,7,8-tetrahydrofolate + NADP(+) = 7,8-dihydrofolate + NADPH + H(+). The protein operates within pyrimidine metabolism; dTTP biosynthesis. It functions in the pathway cofactor biosynthesis; tetrahydrofolate biosynthesis; 5,6,7,8-tetrahydrofolate from 7,8-dihydrofolate: step 1/1. In terms of biological role, bifunctional enzyme. Involved in de novo dTMP biosynthesis. Key enzyme in folate metabolism. Catalyzes an essential reaction for de novo glycine and purine synthesis, DNA precursor synthesis, and for the conversion of dUMP to dTMP. In Trypanosoma brucei brucei, this protein is Bifunctional dihydrofolate reductase-thymidylate synthase.